We begin with the raw amino-acid sequence, 188 residues long: Meiotically up-regulated gene 94 protein (188 aa).

It is found in the cytoplasm. Its subcellular location is the nucleus. Has a role in meiosis. The polypeptide is Meiotically up-regulated gene 94 protein (mug94) (Schizosaccharomyces pombe (strain 972 / ATCC 24843) (Fission yeast)).